Reading from the N-terminus, the 170-residue chain is Cathelicidin antimicrobial peptide (170 aa).

Residues 1–30 (MKTQRDSPSLGRWSLVLLLLGLVMPLAIVA) form the signal peptide. Residues 31–131 (QVLSYQEAVL…DISCDKDNRR (101 aa)) constitute a propeptide, cathelin-like domain (CLD). Cystine bridges form between cysteine 86–cysteine 97 and cysteine 108–cysteine 125. The tract at residues 150-162 (LKKVGQKIKDFLG) is active core.

This sequence belongs to the cathelicidin family. In terms of assembly, monomer, homodimer or homotrimer (in vitro). Oligomerizes as tetra- or hexamer in solution (in vitro). Proteolytically cleaved by proteinase PRTN3 into antibacterial peptide LL-37. Proteolytically cleaved by cathepsin CTSG and neutrophil elastase ELANE. Post-translationally, resistant to proteolytic degradation in solution, and when bound to both zwitterionic (mimicking mammalian membranes) and negatively charged membranes (mimicking bacterial membranes). In terms of processing, after secretion onto the skin surface, the CAMP gene product is processed by a serine protease-dependent mechanism into multiple novel antimicrobial peptides distinct from and shorter than cathelicidin LL-37. These peptides show enhanced antimicrobial action, acquiring the ability to kill skin pathogens such as S.aureus, E.coli and C.albicans. These peptides have lost the ability to stimulate CXCL8/IL8 release from keratinocytes. The peptides act synergistically, killing bacteria at lower concentrations when present together, and maintain activity at increased salt condition.

It is found in the secreted. It localises to the vesicle. Antimicrobial protein that is an integral component of the innate immune system. Binds to bacterial lipopolysaccharides (LPS). Acts via neutrophil N-formyl peptide receptors to enhance the release of CXCL2. Postsecretory processing generates multiple cathelicidin antimicrobial peptides with various lengths which act as a topical antimicrobial defense in sweat on skin. The unprocessed precursor form, cathelicidin antimicrobial peptide, inhibits the growth of Gram-negative E.coli and E.aerogenes with efficiencies comparable to that of the mature peptide LL-37 (in vitro). Functionally, antimicrobial peptide that is an integral component of the innate immune system. Binds to bacterial lipopolysaccharides (LPS). Causes membrane permeabilization by forming transmembrane pores (in vitro). Causes lysis of E.coli. Exhibits antimicrobial activity against Gram-negative bacteria such as P.aeruginosa, S.typhimurium, E.aerogenes, E.coli and P.syringae, Gram-positive bacteria such as L.monocytogenes, S.epidermidis, S.pyogenes and S.aureus, as well as vancomycin-resistant enterococci (in vitro). Exhibits antimicrobial activity against methicillin-resistant S.aureus, P.mirabilis, and C.albicans in low-salt media, but not in media containing 100 mM NaCl (in vitro). Forms chiral supramolecular assemblies with quinolone signal (PQS) molecules of P.aeruginosa, which may lead to interference of bacterial quorum signaling and perturbance of bacterial biofilm formation. May form supramolecular fiber-like assemblies on bacterial membranes. Induces cytokine and chemokine producation as well as TNF/TNFA and CSF2/GMCSF production in normal human keratinocytes. Exhibits hemolytic activity against red blood cells. In terms of biological role, exhibits antimicrobial activity against E.coli and B.megaterium (in vitro). The protein is Cathelicidin antimicrobial peptide of Papio papio (Guinea baboon).